A 339-amino-acid chain; its full sequence is Annexin A2 (339 aa).

Residue Ser-2 is modified to N-acetylserine. Positions 2 to 24 (STVHEILSKLSLEGDHSLPPSAY) are S100A10-binding site. At Tyr-24 the chain carries Phosphotyrosine; by SRC. A Phosphothreonine; by PKC modification is found at Thr-26. 4 Annexin repeats span residues 33–104 (FDAD…GLLK), 105–176 (TPSQ…ALAK), 189–261 (ELID…NLVQ), and 265–336 (NKQL…NLCG).

It belongs to the annexin family. As to quaternary structure, heterotetramer containing 2 light chains of S100A10/p11 and 2 heavy chains of ANXA2/p36.

It localises to the secreted. Its subcellular location is the extracellular space. The protein resides in the extracellular matrix. It is found in the basement membrane. Its function is as follows. Calcium-regulated membrane-binding protein whose affinity for calcium is greatly enhanced by anionic phospholipids. It binds two calcium ions with high affinity. The protein is Annexin A2 (ANXA2) of Gallus gallus (Chicken).